Here is a 413-residue protein sequence, read N- to C-terminus: Transposon Ty4-H Gag polyprotein (413 aa).

A coiled-coil region spans residues 39–115; sequence RKVSIKDEQV…IQLLETNENN (77 aa). Residues 380–413 are disordered; that stretch reads RQQQLKSSAKRTKVLEQDTKKVKQSVQQQKTGNY. Residues 403 to 413 show a composition bias toward low complexity; sequence QSVQQQKTGNY.

Capsid protein (CA) is the structural component of the virus-like particle (VLP), forming the shell that encapsulates the retrotransposons dimeric RNA genome. The chain is Transposon Ty4-H Gag polyprotein (TY4A-H) from Saccharomyces cerevisiae (strain ATCC 204508 / S288c) (Baker's yeast).